Consider the following 507-residue polypeptide: Probable bifunctional methylthioribulose-1-phosphate dehydratase/enolase-phosphatase E1 (507 aa).

Alanine 2 carries the post-translational modification N-acetylalanine. A methylthioribulose-1-phosphate dehydratase region spans residues 2–237 (AVAAAAMIGL…AIKLHQLGLD (236 aa)). Position 109 (cysteine 109) interacts with substrate. Histidine 127 and histidine 129 together coordinate Zn(2+). Glutamate 152 functions as the Proton donor/acceptor in the catalytic mechanism. Histidine 202 contributes to the Zn(2+) binding site. The segment at 268–507 (IVLDIEGTTT…FKTVTSFSQI (240 aa)) is enolase-phosphatase E1. Aspartate 271 and glutamate 273 together coordinate Mg(2+). Residues 406–407 (SS) and lysine 440 contribute to the substrate site. Aspartate 466 is a binding site for Mg(2+).

It in the N-terminal section; belongs to the aldolase class II family. MtnB subfamily. The protein in the C-terminal section; belongs to the HAD-like hydrolase superfamily. MasA/MtnC family. Zn(2+) serves as cofactor. It depends on Mg(2+) as a cofactor.

The catalysed reaction is 5-(methylsulfanyl)-D-ribulose 1-phosphate = 5-methylsulfanyl-2,3-dioxopentyl phosphate + H2O. The enzyme catalyses 5-methylsulfanyl-2,3-dioxopentyl phosphate + H2O = 1,2-dihydroxy-5-(methylsulfanyl)pent-1-en-3-one + phosphate. It participates in amino-acid biosynthesis; L-methionine biosynthesis via salvage pathway; L-methionine from S-methyl-5-thio-alpha-D-ribose 1-phosphate: step 2/6. The protein operates within amino-acid biosynthesis; L-methionine biosynthesis via salvage pathway; L-methionine from S-methyl-5-thio-alpha-D-ribose 1-phosphate: step 3/6. It functions in the pathway amino-acid biosynthesis; L-methionine biosynthesis via salvage pathway; L-methionine from S-methyl-5-thio-alpha-D-ribose 1-phosphate: step 4/6. This chain is Probable bifunctional methylthioribulose-1-phosphate dehydratase/enolase-phosphatase E1, found in Arabidopsis thaliana (Mouse-ear cress).